A 627-amino-acid polypeptide reads, in one-letter code: MIRYTVAGHSRRCVVGASKRVGAIKCITVAATKRFISNKPNEVFTKLTNDNDPKRDAFFKYTWGSWLKNDKQEKEKRFTKFSIEGLNRILNDIYIQSNEMAKAPDGKILPPVFNKNLTVSLVNNVVPKNIGKINPNEKVQVTTLSSIHEGKHHRIYKVDTNLNKAFILRIPYPLENENTLSYRIRSEVATMDFADLKLGIKVPKIFCYGVNSLNPVRQPFVLQEFIEGELLMKDWDPLIEDGSSNQKKYDNVIKQVSDFQSKLVSLKLNAFGSIYFNNDLKDGNEKEFVKEDIYDGETNPDLQNRWKIGPSVERCLWRHKSHLDFHKQMKPFLGPWPKKSPMDIIKNTGLLEAENAKTRIAMKEAGSSAELMYPRTLKEQITTYENLAKIAPDLFNVKTKAIPNMQELLSPRLFHPDLDPMNIIVNKEAQEAYLLDFEGACTKPFILQNSPQFIAYDGPKIYDLKEDITDFDKLSEAEKVQYQFMYKRTRNQHQWEKKLNDNNPKLITAVAPPVKLLRSPYIAAVERKTEEEYLLIDESLLQLKEVWDIFAQNELVNQKKFPLNYSKEDIERHVEDLQKLHEKLISTPFAATQGWIPQDMFDQLLNSGSIVKQENGDYTVKQPEATK.

The N-terminal 43 residues, 1 to 43 (MIRYTVAGHSRRCVVGASKRVGAIKCITVAATKRFISNKPNEV), are a transit peptide targeting the mitochondrion.

It belongs to the AIM9 family.

The protein resides in the mitochondrion. The polypeptide is Altered inheritance of mitochondria protein 9, mitochondrial (AIM9) (Saccharomyces cerevisiae (strain ATCC 204508 / S288c) (Baker's yeast)).